Reading from the N-terminus, the 160-residue chain is Class II hydrophobin 8 (160 aa).

4 disulfides stabilise this stretch: Cys-92–Cys-141, Cys-102–Cys-132, Cys-103–Cys-115, and Cys-142–Cys-153.

This sequence belongs to the cerato-ulmin hydrophobin family. As to quaternary structure, homodimer. Homodimers further self-assemble to form highly ordered films at water-air interfaces through intermolecular interactions.

The protein resides in the secreted. The protein localises to the cell wall. Aerial growth, conidiation, and dispersal of filamentous fungi in the environment rely upon a capability of their secreting small amphipathic proteins called hydrophobins (HPBs) with low sequence identity. Class I can self-assemble into an outermost layer of rodlet bundles on aerial cell surfaces, conferring cellular hydrophobicity that supports fungal growth, development and dispersal; whereas Class II form highly ordered films at water-air interfaces through intermolecular interactions but contribute nothing to the rodlet structure. The chain is Class II hydrophobin 8 from Trichoderma asperellum (strain ATCC 204424 / CBS 433.97 / NBRC 101777).